Consider the following 89-residue polypeptide: Small ribosomal subunit protein uS15 (89 aa).

The protein belongs to the universal ribosomal protein uS15 family. As to quaternary structure, part of the 30S ribosomal subunit. Forms a bridge to the 50S subunit in the 70S ribosome, contacting the 23S rRNA.

Functionally, one of the primary rRNA binding proteins, it binds directly to 16S rRNA where it helps nucleate assembly of the platform of the 30S subunit by binding and bridging several RNA helices of the 16S rRNA. Its function is as follows. Forms an intersubunit bridge (bridge B4) with the 23S rRNA of the 50S subunit in the ribosome. The polypeptide is Small ribosomal subunit protein uS15 (Pseudomonas fluorescens (strain Pf0-1)).